The sequence spans 855 residues: Pre-mRNA-splicing factor SYF1 (855 aa).

9 HAT repeats span residues 15–47 (LVFE…FKQG), 48–80 (APKP…ARRA), 90–122 (PAYE…FLMD), 124–158 (GRVT…FLRS), 160–192 (PLPE…SSDR), 198–230 (QRLA…LISQ), 235–268 (VQSL…YYIR), 270–305 (GHFE…FEES), and 369–407 (GRPR…FYED). Position 420 is an N6-acetyllysine (Lys420). HAT repeat units follow at residues 498–530 (GTFQ…FLEE), 532–566 (KYFE…KFIS), 571–605 (RKLE…LEEE), 643–677 (YGVT…MECK), and 679–713 (GEID…FEVR). The tract at residues 808–855 (AELAQQANPEEIQLGEDEDEDEMDLEPNEVRLEQQSVPAAVFGSLKED) is disordered. The segment covering 820–834 (QLGEDEDEDEMDLEP) has biased composition (acidic residues). Residue Ser851 is modified to Phosphoserine.

The protein belongs to the crooked-neck family. Associates with RNA polymerase II, the TCR-specific proteins CKN1/CSA and ERCC6/CSB, and XPA. Identified in the spliceosome C complex. Component of the XAB2 complex, a multimeric protein complex composed of XAB2, PRPF19, AQR, ZNF830, ISY1, and PPIE. Identified in a pentameric intron-binding (IB) complex composed of AQR, XAB2, ISY1, ZNF830 and PPIE that is incorporated into the spliceosome as a preassembled complex. The IB complex does not contain PRPF19.

The protein resides in the nucleus. Functionally, involved in pre-mRNA splicing as component of the spliceosome. Involved in transcription-coupled repair (TCR), transcription and pre-mRNA splicing. The chain is Pre-mRNA-splicing factor SYF1 (Xab2) from Mus musculus (Mouse).